Here is a 528-residue protein sequence, read N- to C-terminus: MSLIHLFLLLGLLSLEAAASFSPGSRSILRDIGSNVADQKDNAIELNATNFDSVFQDSPAKYAVLEFFAHWCPACRNYKPHYEKVARLFNGADAVYPGVVLMTRVDCAIKMNVKLCDKFSINHYPMLFWAPPKRFVGGSWGPKQEKNEISVVNEWRTADLLLNWINKQIGSSYGLDDQKLGNLLSNISDQEQISQAIFDIEEATEEAFDIILAHKAIKSSETSASFIRFLQLLVAHHPSRRCRTGSAEILVNFDDICPSGECSYDQESGAKDSLRNFHICGKDVPRGYYRFCRGSKNETRGFSCGLWVLMHSLSVRIEDGESQFAFTAICDFINNFFMCDDCRRHFHDMCLSVKTPFKKARDIALWLWSTHNKVNERLKKDEDSLGTGDPKFPKMIWPPKQLCPSCYLSSTEKNIDWDHDQVYKFLKKYYGQKLVSVYKKNGESVSKEEVIAAAEEMAVPTNALVVPVGAALAIALASCAFGALACYWRTQQKNRKYNYNPHYLKRYNSNYMVMNTFSNTESEREKER.

Positions 1-19 (MSLIHLFLLLGLLSLEAAA) are cleaved as a signal peptide. The 136-residue stretch at 35 to 170 (NVADQKDNAI…LLNWINKQIG (136 aa)) folds into the Thioredoxin domain. N-linked (GlcNAc...) asparagine glycosylation is present at N47. Catalysis depends on nucleophile residues C72 and C75. C72 and C75 are joined by a disulfide. N186 and N297 each carry an N-linked (GlcNAc...) asparagine glycan. C292 and C304 form a disulfide bridge. In terms of domain architecture, ERV/ALR sulfhydryl oxidase spans 295 to 397 (SKNETRGFSC…GDPKFPKMIW (103 aa)). FAD-binding positions include R300, W307, H311, D341, H345, 368–375 (WSTHNKVN), K394, and W397. A disulfide bridge connects residues C339 and C342. C403 and C406 are joined by a disulfide.

It depends on FAD as a cofactor. Highly expressed in roots.

Its subcellular location is the secreted. The protein resides in the cell wall. The catalysed reaction is 2 R'C(R)SH + O2 = R'C(R)S-S(R)CR' + H2O2. Sulfhydryl oxidase involved in the regulation of cation homeostasis. Positively regulates shoot accumulation of K(+) and inhibits accumulation of toxic cations. Acts at the level of root K(+) efflux systems involved in xylem loading (root symplast-xylem interface). This is Sulfhydryl oxidase 1 (QSOX1) from Arabidopsis thaliana (Mouse-ear cress).